Reading from the N-terminus, the 647-residue chain is Putative ferric-chelate reductase 1 homolog (647 aa).

A helical membrane pass occupies residues 10-30 (WLATLVTALLAVAIWPDPGQS). A Reelin domain is found at 25–195 (PDPGQSLPQG…AAPPLPTQSP (171 aa)). Asn127 and Asn158 each carry an N-linked (GlcNAc...) asparagine glycan. One can recognise a DOMON domain in the interval 245 to 368 (TKSCTSITVV…GKYHLLVASG (124 aa)). The Cytochrome b561 domain occupies 372–570 (KENSVGYHDI…HLIFSIGGMA (199 aa)). Residues 408–428 (LHGAFMIAAWIGTTSLGIIFA) traverse the membrane as a helical segment. Heme b contacts are provided by His409 and His450. A run of 5 helical transmembrane segments spans residues 452 to 472 (LLMV…WVEL), 480 to 500 (HSII…GALF), 515 to 535 (GHWL…FFSV), 548 to 568 (WILV…SIGG), and 616 to 636 (LLGV…LLVV). Heme b-binding residues include His480 and His516.

It belongs to the FRRS1 family. It depends on heme b as a cofactor.

It is found in the membrane. Its function is as follows. Putative ferric-chelate reductases reduce Fe(3+) to Fe(2+) before its transport from the endosome to the cytoplasm. In Drosophila melanogaster (Fruit fly), this protein is Putative ferric-chelate reductase 1 homolog.